Here is a 270-residue protein sequence, read N- to C-terminus: Feruloyl esterase C (270 aa).

An N-terminal signal peptide occupies residues 1 to 21 (MLRAVLLPTLLAFGAFTPVHG).

The protein belongs to the faeC family.

It localises to the secreted. It carries out the reaction feruloyl-polysaccharide + H2O = ferulate + polysaccharide.. In terms of biological role, involved in degradation of plant cell walls. Hydrolyzes the feruloyl-arabinose ester bond in arabinoxylans, and the feruloyl-galactose ester bond in pectin. Active against paranitrophenyl-acetate, methyl ferulate and wheat arabinoxylan. The polypeptide is Feruloyl esterase C (faeC) (Emericella nidulans (strain FGSC A4 / ATCC 38163 / CBS 112.46 / NRRL 194 / M139) (Aspergillus nidulans)).